Here is a 124-residue protein sequence, read N- to C-terminus: Magnetosome protein MamC (124 aa).

The Cytoplasmic segment spans residues 2–8; sequence PFHLAPY. Residues 9-29 traverse the membrane as a helical segment; it reads LAKSVPGVGVLGALVGGAAAL. Over 30–64 the chain is Lumenal; sequence AKNVRLLKEKRITNTEAAIDTGKETVGAGLATALS. Residues 36-56 form an MIC, when fused with the C-terminus of maltose-binding protein (MBP) or expressed as a fragment, improves quality of iron particles during precipitation experiments, binds magnetite region; sequence LKEKRITNTEAAIDTGKETVG. Residues 65–85 form a helical membrane-spanning segment; the sequence is AVAATAVGGGLVVSLGTALVA. Over 86–124 the chain is Cytoplasmic; it reads GVAAKYAWDRGVDLVEKELNRGKAANGASDEDILRDELA.

This sequence belongs to the magnetosome MamC family. In terms of assembly, probably interacts with MamA.

The protein localises to the magnetosome membrane. Its function is as follows. Probably involved in magnetite crystal growth. The lumenal domain may bind the magnetite crystals, affecting crystal size and shape. The protein is Magnetosome protein MamC of Paramagnetospirillum magneticum (strain ATCC 700264 / AMB-1) (Magnetospirillum magneticum).